We begin with the raw amino-acid sequence, 156 residues long: Protein E6 (156 aa).

Zinc fingers lie at residues 42-78 (CHYCYKILSVLDIYAFDQSCLYLSWGEGGPTGICSQC) and 115-151 (CVRCLALLQSVEKDYILREDLSVHRIGGIWRGTCVRC).

It belongs to the papillomaviridae E6 protein family. As to quaternary structure, forms homodimers. Interacts with ubiquitin-protein ligase UBE3A/E6-AP; this interaction stimulates UBE3A ubiquitin activity. Interacts with host BAK1.

It is found in the host cytoplasm. It localises to the host nucleus. Plays a major role in the induction and maintenance of cellular transformation. E6 associates with host UBE3A/E6-AP ubiquitin-protein ligase and modulates its activity. Protects host keratinocytes from apoptosis by mediating the degradation of host BAK1. May also inhibit host immune response. The sequence is that of Protein E6 from Homo sapiens (Human).